The following is a 196-amino-acid chain: MTKRTASIKRQTTETTISLSLNLDGSGQAEMCTGVRLFDHMLSQLAKHGLFDINVSANGDDIHHLVEDVALTLGKAFNEALGERKGIVRMADATVPMDDSLATVALDLSGRGYAVVDLPFSKNDLTGFPTDLVRHFLETFAIEGRLNLHARILYGSNDHHKAEALFKALARALDKATSLDPRREGIAPSTKGMLEN.

The protein belongs to the imidazoleglycerol-phosphate dehydratase family.

The protein resides in the cytoplasm. The enzyme catalyses D-erythro-1-(imidazol-4-yl)glycerol 3-phosphate = 3-(imidazol-4-yl)-2-oxopropyl phosphate + H2O. It participates in amino-acid biosynthesis; L-histidine biosynthesis; L-histidine from 5-phospho-alpha-D-ribose 1-diphosphate: step 6/9. In Dehalococcoides mccartyi (strain ATCC BAA-2266 / KCTC 15142 / 195) (Dehalococcoides ethenogenes (strain 195)), this protein is Imidazoleglycerol-phosphate dehydratase.